A 369-amino-acid chain; its full sequence is sn-glycerol-3-phosphate import ATP-binding protein UgpC 1 (369 aa).

The ABC transporter domain maps to 4 to 234 (ISIRGVKKNY…PVSRFVAGFV (231 aa)). 36–43 (GPSGCGKS) provides a ligand contact to ATP.

This sequence belongs to the ABC transporter superfamily. sn-glycerol-3-phosphate importer (TC 3.A.1.1.3) family. As to quaternary structure, the complex is composed of two ATP-binding proteins (UgpC), two transmembrane proteins (UgpA and UgpE) and a solute-binding protein (UgpB).

The protein resides in the cell inner membrane. It catalyses the reaction sn-glycerol 3-phosphate(out) + ATP + H2O = sn-glycerol 3-phosphate(in) + ADP + phosphate + H(+). Its function is as follows. Part of the ABC transporter complex UgpBAEC involved in sn-glycerol-3-phosphate (G3P) import. Responsible for energy coupling to the transport system. The chain is sn-glycerol-3-phosphate import ATP-binding protein UgpC 1 from Rhizobium johnstonii (strain DSM 114642 / LMG 32736 / 3841) (Rhizobium leguminosarum bv. viciae).